A 322-amino-acid polypeptide reads, in one-letter code: RNA-binding motif protein, X-linked 2 (322 aa).

Lys8 participates in a covalent cross-link: Glycyl lysine isopeptide (Lys-Gly) (interchain with G-Cter in SUMO2). The 79-residue stretch at 36–114 (AWIFLGGLPY…RTIRVDHVSN (79 aa)) folds into the RRM domain. A disordered region spans residues 134–322 (KGCGARTPSP…SSNPSDRWRH (189 aa)). Thr140 is modified (phosphothreonine). A Phosphoserine modification is found at Ser149. Over residues 155–171 (TKKHKKDKKEKKKKKKE) the composition is skewed to basic residues. Phosphoserine occurs at positions 186 and 188. Residues 195-223 (KEKDDTGPKKHSSKNSERAQKSEPREGQK) show a composition bias toward basic and acidic residues. Phosphoserine is present on Ser232. Basic and acidic residues predominate over residues 240–274 (RELKKEKPKHEHKSSSRREAREEKTRIRDRGRSSD). Residue Lys243 forms a Glycyl lysine isopeptide (Lys-Gly) (interchain with G-Cter in SUMO2) linkage. Ser272 carries the post-translational modification Phosphoserine. A compositionally biased stretch (basic residues) spans 289-308 (YRSRSRSRDKSHRHKRARRS). Ser314 carries the phosphoserine modification.

Belongs to the IST3 family. In terms of assembly, part of the activated spliceosome B/catalytic step 1 spliceosome, one of the forms of the spliceosome which has a well-formed active site but still cannot catalyze the branching reaction and is composed of at least 52 proteins, the U2, U5 and U6 snRNAs and the pre-mRNA. Component of the minor spliceosome, which splices U12-type introns.

It is found in the nucleus. Functionally, involved in pre-mRNA splicing as component of the activated spliceosome. As a component of the minor spliceosome, involved in the splicing of U12-type introns in pre-mRNAs. This chain is RNA-binding motif protein, X-linked 2 (RBMX2), found in Homo sapiens (Human).